The primary structure comprises 86 residues: Probable weak neurotoxin NNAM3 (86 aa).

The N-terminal stretch at 1–21 (MKTLLLTLVVVTIVCLDLGYT) is a signal peptide. Intrachain disulfides connect cysteine 24–cysteine 45, cysteine 27–cysteine 32, cysteine 38–cysteine 63, cysteine 67–cysteine 78, and cysteine 79–cysteine 84.

It belongs to the three-finger toxin family. Ancestral subfamily. Orphan group II sub-subfamily. In terms of tissue distribution, expressed by the venom gland.

The protein resides in the secreted. Its function is as follows. Binds with low affinity to muscular (alpha-1-beta-1-delta-epsilon/CHRNA1-CHRNB1-CHRND-CHRNE) and very low affinity to neuronal (alpha-7/CHRNA7) nicotinic acetylcholine receptor (nAChR). This is Probable weak neurotoxin NNAM3 from Naja atra (Chinese cobra).